The chain runs to 420 residues: D-tagatose-1,6-bisphosphate aldolase subunit GatZ (420 aa).

This sequence belongs to the GatZ/KbaZ family. GatZ subfamily. As to quaternary structure, forms a complex with GatY.

Its pathway is carbohydrate metabolism; D-tagatose 6-phosphate degradation; D-glyceraldehyde 3-phosphate and glycerone phosphate from D-tagatose 6-phosphate: step 2/2. Component of the tagatose-1,6-bisphosphate aldolase GatYZ that is required for full activity and stability of the Y subunit. Could have a chaperone-like function for the proper and stable folding of GatY. When expressed alone, GatZ does not show any aldolase activity. Is involved in the catabolism of galactitol. The chain is D-tagatose-1,6-bisphosphate aldolase subunit GatZ (gatZ) from Escherichia coli.